We begin with the raw amino-acid sequence, 254 residues long: MNMKNKSEKEMTHFGFQNVYKDKKTSLVSNVFHTVASQYDLMNDLMSFGIHRMWKRFTIYRSEVYVGCIVLDLAGGTGDLSIQFSRLVGNTGIVVLADINDSMLHIGQKKLRDLGILNNVIYIQADAEALPFSENTFDCVAVSFGLRNFTNKEQALFSIHRVLKPRGKLLILDFGVPNFKVLHKIYDLYSFHILPKIGKCITQDINSYRYLVESIRMHPDQETLKNMIIRTGFSNVEYFNMTFGIAVLHCAYKC.

Residues Thr-77, Asp-98, 126–127, and Ser-143 contribute to the S-adenosyl-L-methionine site; that span reads DA.

The protein belongs to the class I-like SAM-binding methyltransferase superfamily. MenG/UbiE family.

The enzyme catalyses a 2-demethylmenaquinol + S-adenosyl-L-methionine = a menaquinol + S-adenosyl-L-homocysteine + H(+). It carries out the reaction a 2-methoxy-6-(all-trans-polyprenyl)benzene-1,4-diol + S-adenosyl-L-methionine = a 5-methoxy-2-methyl-3-(all-trans-polyprenyl)benzene-1,4-diol + S-adenosyl-L-homocysteine + H(+). It participates in quinol/quinone metabolism; menaquinone biosynthesis; menaquinol from 1,4-dihydroxy-2-naphthoate: step 2/2. It functions in the pathway cofactor biosynthesis; ubiquinone biosynthesis. In terms of biological role, methyltransferase required for the conversion of demethylmenaquinol (DMKH2) to menaquinol (MKH2) and the conversion of 2-polyprenyl-6-methoxy-1,4-benzoquinol (DDMQH2) to 2-polyprenyl-3-methyl-6-methoxy-1,4-benzoquinol (DMQH2). The polypeptide is Ubiquinone/menaquinone biosynthesis C-methyltransferase UbiE (Blochmanniella pennsylvanica (strain BPEN)).